The following is a 66-amino-acid chain: Hirudin-PA (66 aa).

The segment at 1-3 (ITY) is interaction with thrombin active site. Disulfide bonds link cysteine 6–cysteine 14, cysteine 16–cysteine 28, and cysteine 22–cysteine 39. A disordered region spans residues 39–66 (CVTGEGTPKPQSHNQGDFEPIPEDAYDE). The O-linked (GalNAc...) threonine glycan is linked to threonine 45. Positions 55-66 (DFEPIPEDAYDE) are interaction with fibrinogen-binding exosite of thrombin. Tyrosine 64 bears the Sulfotyrosine mark.

Belongs to the protease inhibitor I14 (hirudin) family.

Its subcellular location is the secreted. Functionally, hirudin is a potent thrombin-specific protease inhibitor. It forms a stable non-covalent complex with alpha-thrombin, thereby abolishing its ability to cleave fibrinogen. The sequence is that of Hirudin-PA from Hirudo medicinalis (Medicinal leech).